We begin with the raw amino-acid sequence, 49 residues long: Large ribosomal subunit protein bL33B (49 aa).

It belongs to the bacterial ribosomal protein bL33 family.

This Bacillus pumilus (strain SAFR-032) protein is Large ribosomal subunit protein bL33B.